Consider the following 128-residue polypeptide: Arginine decarboxylase proenzyme (128 aa).

Ser76 (schiff-base intermediate with substrate; via pyruvic acid) is an active-site residue. At Ser76 the chain carries Pyruvic acid (Ser); by autocatalysis. Catalysis depends on His81, which acts as the Proton acceptor; for processing activity. Catalysis depends on Cys96, which acts as the Proton donor; for catalytic activity.

This sequence belongs to the prokaryotic AdoMetDC family. Type 1 subfamily. In terms of assembly, heterooctamer of four alpha and four beta chains arranged as a tetramer of alpha/beta heterodimers. The cofactor is pyruvate. In terms of processing, is synthesized initially as an inactive proenzyme. Formation of the active enzyme involves a self-maturation process in which the active site pyruvoyl group is generated from an internal serine residue via an autocatalytic post-translational modification. Two non-identical subunits are generated from the proenzyme in this reaction, and the pyruvate is formed at the N-terminus of the alpha chain, which is derived from the carboxyl end of the proenzyme. The post-translation cleavage follows an unusual pathway, termed non-hydrolytic serinolysis, in which the side chain hydroxyl group of the serine supplies its oxygen atom to form the C-terminus of the beta chain, while the remainder of the serine residue undergoes an oxidative deamination to produce ammonia and the pyruvoyl group blocking the N-terminus of the alpha chain.

It carries out the reaction L-arginine + H(+) = agmatine + CO2. The protein operates within amine and polyamine biosynthesis; agmatine biosynthesis; agmatine from L-arginine: step 1/1. Specifically catalyzes the decarboxylation of L-arginine to agmatine. Has no S-adenosylmethionine decarboxylase (AdoMetDC) activity. This is Arginine decarboxylase proenzyme from Sulfurisphaera tokodaii (strain DSM 16993 / JCM 10545 / NBRC 100140 / 7) (Sulfolobus tokodaii).